Here is a 194-residue protein sequence, read N- to C-terminus: Outer-membrane lipoprotein LolB (194 aa).

The first 18 residues, 1–18, serve as a signal peptide directing secretion; that stretch reads MTLLLRLFTLGCLLLLAG. C19 carries the N-palmitoyl cysteine lipid modification. A lipid anchor (S-diacylglycerol cysteine) is attached at C19.

The protein belongs to the LolB family. In terms of assembly, monomer.

Its subcellular location is the cell outer membrane. Functionally, plays a critical role in the incorporation of lipoproteins in the outer membrane after they are released by the LolA protein. The chain is Outer-membrane lipoprotein LolB from Aeromonas hydrophila subsp. hydrophila (strain ATCC 7966 / DSM 30187 / BCRC 13018 / CCUG 14551 / JCM 1027 / KCTC 2358 / NCIMB 9240 / NCTC 8049).